A 365-amino-acid chain; its full sequence is 4-hydroxy-3-methylbut-2-en-1-yl diphosphate synthase (flavodoxin) (365 aa).

The [4Fe-4S] cluster site is built by Cys-270, Cys-273, Cys-305, and Glu-312.

The protein belongs to the IspG family. Requires [4Fe-4S] cluster as cofactor.

It catalyses the reaction (2E)-4-hydroxy-3-methylbut-2-enyl diphosphate + 2 oxidized [2Fe-2S]-[ferredoxin] + H2O = 2-C-methyl-D-erythritol 2,4-cyclic diphosphate + 2 reduced [2Fe-2S]-[ferredoxin] + H(+). The enzyme catalyses (2E)-4-hydroxy-3-methylbut-2-enyl diphosphate + oxidized [flavodoxin] + H2O + 2 H(+) = 2-C-methyl-D-erythritol 2,4-cyclic diphosphate + reduced [flavodoxin]. Its pathway is isoprenoid biosynthesis; isopentenyl diphosphate biosynthesis via DXP pathway; isopentenyl diphosphate from 1-deoxy-D-xylulose 5-phosphate: step 5/6. Converts 2C-methyl-D-erythritol 2,4-cyclodiphosphate (ME-2,4cPP) into 1-hydroxy-2-methyl-2-(E)-butenyl 4-diphosphate. Involved in density-dependent regulation of 2'-N-acetyltransferase. This chain is 4-hydroxy-3-methylbut-2-en-1-yl diphosphate synthase (flavodoxin), found in Providencia stuartii.